The sequence spans 102 residues: NADH-quinone oxidoreductase subunit K 2 (102 aa).

The next 3 helical transmembrane spans lie at 5 to 25 (FEHV…CVLV), 30 to 50 (LIML…AFVG), and 65 to 85 (LIIM…VVYL).

The protein belongs to the complex I subunit 4L family. In terms of assembly, NDH-1 is composed of 14 different subunits. Subunits NuoA, H, J, K, L, M, N constitute the membrane sector of the complex.

It is found in the cell inner membrane. It catalyses the reaction a quinone + NADH + 5 H(+)(in) = a quinol + NAD(+) + 4 H(+)(out). NDH-1 shuttles electrons from NADH, via FMN and iron-sulfur (Fe-S) centers, to quinones in the respiratory chain. The immediate electron acceptor for the enzyme in this species is believed to be ubiquinone. Couples the redox reaction to proton translocation (for every two electrons transferred, four hydrogen ions are translocated across the cytoplasmic membrane), and thus conserves the redox energy in a proton gradient. The protein is NADH-quinone oxidoreductase subunit K 2 of Geobacter sulfurreducens (strain ATCC 51573 / DSM 12127 / PCA).